A 42-amino-acid polypeptide reads, in one-letter code: Protein Tat (42 aa).

An interaction with human CREBBP region spans residues 1–24 (MEPVDPNLEPWNHPGSQPKTACNQ). Residues 22–37 (CNQCYCKKCSYHCLVC) form a cysteine-rich region. Residue Lys-28 is modified to N6-acetyllysine; by host PCAF.

The protein belongs to the lentiviruses Tat family. In terms of assembly, interacts with host CCNT1. Associates with the P-TEFb complex composed at least of Tat, P-TEFb (CDK9 and CCNT1), TAR RNA, RNA Pol II. Recruits the HATs CREBBP, TAF1/TFIID, EP300, PCAF and GCN5L2. Interacts with host KAT5/Tip60; this interaction targets the latter to degradation. Interacts with the host deacetylase SIRT1. Interacts with host capping enzyme RNGTT; this interaction stimulates RNGTT. Binds to host KDR, and to the host integrins ITGAV/ITGB3 and ITGA5/ITGB1. Interacts with host KPNB1/importin beta-1 without previous binding to KPNA1/importin alpha-1. Interacts with EIF2AK2. Interacts with host nucleosome assembly protein NAP1L1; this interaction may be required for the transport of Tat within the nucleus, since the two proteins interact at the nuclear rim. Interacts with host C1QBP/SF2P32; this interaction involves lysine-acetylated Tat. Interacts with the host chemokine receptors CCR2, CCR3 and CXCR4. Interacts with host DPP4/CD26; this interaction may trigger an anti-proliferative effect. Interacts with host LDLR. Interacts with the host extracellular matrix metalloproteinase MMP1. Interacts with host PRMT6; this interaction mediates Tat's methylation. Interacts with, and is ubiquitinated by MDM2/Hdm2. Interacts with host PSMC3 and HTATIP2. Interacts with STAB1; this interaction may overcome SATB1-mediated repression of IL2 and IL2RA (interleukin) in T cells by binding to the same domain than HDAC1. Interacts (when acetylated) with human CDK13, thereby increasing HIV-1 mRNA splicing and promoting the production of the doubly spliced HIV-1 protein Nef. Interacts with host TBP; this interaction modulates the activity of transcriptional pre-initiation complex. Interacts with host RELA. Interacts with host PLSCR1; this interaction negatively regulates Tat transactivation activity by altering its subcellular distribution. Post-translationally, phosphorylated by EIF2AK2 on serine and threonine residues adjacent to the basic region important for TAR RNA binding and function. Phosphorylation of Tat by EIF2AK2 is dependent on the prior activation of EIF2AK2 by dsRNA. Asymmetrical arginine methylation by host PRMT6 seems to diminish the transactivation capacity of Tat and affects the interaction with host CCNT1. In terms of processing, polyubiquitination by host MDM2 does not target Tat to degradation, but activates its transactivation function and fosters interaction with CCNT1 and TAR RNA.

The protein localises to the host nucleus. It is found in the host nucleolus. It localises to the host cytoplasm. Its subcellular location is the secreted. Functionally, transcriptional activator that increases RNA Pol II processivity, thereby increasing the level of full-length viral transcripts. Recognizes a hairpin structure at the 5'-LTR of the nascent viral mRNAs referred to as the transactivation responsive RNA element (TAR) and recruits the cyclin T1-CDK9 complex (P-TEFb complex) that will in turn hyperphosphorylate the RNA polymerase II to allow efficient elongation. The CDK9 component of P-TEFb and other Tat-activated kinases hyperphosphorylate the C-terminus of RNA Pol II that becomes stabilized and much more processive. Other factors such as HTATSF1/Tat-SF1, SUPT5H/SPT5, and HTATIP2 are also important for Tat's function. Besides its effect on RNA Pol II processivity, Tat induces chromatin remodeling of proviral genes by recruiting the histone acetyltransferases (HATs) CREBBP, EP300 and PCAF to the chromatin. This also contributes to the increase in proviral transcription rate, especially when the provirus integrates in transcriptionally silent region of the host genome. To ensure maximal activation of the LTR, Tat mediates nuclear translocation of NF-kappa-B by interacting with host RELA. Through its interaction with host TBP, Tat may also modulate transcription initiation. Tat can reactivate a latently infected cell by penetrating in it and transactivating its LTR promoter. In the cytoplasm, Tat is thought to act as a translational activator of HIV-1 mRNAs. Its function is as follows. Extracellular circulating Tat can be endocytosed by surrounding uninfected cells via the binding to several surface receptors such as CD26, CXCR4, heparan sulfate proteoglycans (HSPG) or LDLR. Neurons are rarely infected, but they internalize Tat via their LDLR. Through its interaction with nuclear HATs, Tat is potentially able to control the acetylation-dependent cellular gene expression. Modulates the expression of many cellular genes involved in cell survival, proliferation or in coding for cytokines or cytokine receptors. Tat plays a role in T-cell and neurons apoptosis. Tat induced neurotoxicity and apoptosis probably contribute to neuroAIDS. Circulating Tat also acts as a chemokine-like and/or growth factor-like molecule that binds to specific receptors on the surface of the cells, affecting many cellular pathways. In the vascular system, Tat binds to ITGAV/ITGB3 and ITGA5/ITGB1 integrins dimers at the surface of endothelial cells and competes with bFGF for heparin-binding sites, leading to an excess of soluble bFGF. The polypeptide is Protein Tat (Human immunodeficiency virus type 1 group M subtype C (isolate ETH2220) (HIV-1)).